The following is a 314-amino-acid chain: PDCD10 and GCKIII kinases-associated protein 1 (314 aa).

Ser-30 bears the Phosphoserine mark. A disordered region spans residues 36-142; that stretch reads DDTDKLKGKW…TQPFLEGGGT (107 aa). Thr-106 is modified (phosphothreonine). Over residues 107-116 the composition is skewed to polar residues; the sequence is PQPTGNSSPT. Phosphoserine is present on residues Ser-238 and Ser-241. A disordered region spans residues 267–291; the sequence is VDSGNRQEDTHGSDGDGDGEIVDED. Residues 271-280 show a composition bias toward basic and acidic residues; the sequence is NRQEDTHGSD. A compositionally biased stretch (acidic residues) spans 281–291; sequence GDGDGEIVDED.

Interacts with KEAP1; this interaction prevents the ubiquitination of KEAP1 by TRIM25, thus protecting KEAP1 from degradation. Found in association with PDCD10 and members of the STE20 kinases, such as STK24, STK25 and STK26.

The protein resides in the cell membrane. Functionally, acts as a tumor suppressor. Acts as a tumor suppressor for colorectal cancer cell proliferation by targeting KEAP1/USP17/ELK1/CDK6 axis. The chain is PDCD10 and GCKIII kinases-associated protein 1 from Homo sapiens (Human).